The chain runs to 498 residues: ATP synthase subunit beta, chloroplastic (498 aa).

A Phosphothreonine modification is found at T6. Residue S13 is modified to Phosphoserine. 172–179 is an ATP binding site; the sequence is GGAGVGKT.

It belongs to the ATPase alpha/beta chains family. F-type ATPases have 2 components, CF(1) - the catalytic core - and CF(0) - the membrane proton channel. CF(1) has five subunits: alpha(3), beta(3), gamma(1), delta(1), epsilon(1). CF(0) has four main subunits: a(1), b(1), b'(1) and c(9-12).

It is found in the plastid. Its subcellular location is the chloroplast thylakoid membrane. The enzyme catalyses ATP + H2O + 4 H(+)(in) = ADP + phosphate + 5 H(+)(out). Its function is as follows. Produces ATP from ADP in the presence of a proton gradient across the membrane. The catalytic sites are hosted primarily by the beta subunits. This Barbarea verna (Land cress) protein is ATP synthase subunit beta, chloroplastic.